A 129-amino-acid polypeptide reads, in one-letter code: uncharacterized protein (129 aa).

A disordered region spans residues 23–101; the sequence is KASTSSESCQ…TAATRTTSKK (79 aa). Basic and acidic residues-rich tracts occupy residues 31 to 40 and 67 to 80; these read CQRRGVRDDT and EGDR…EKEP.

This is an uncharacterized protein from Ictaluridae (bullhead catfishes).